We begin with the raw amino-acid sequence, 730 residues long: Rap1 GTPase-activating protein 2 (730 aa).

Residue Ser7 is modified to Phosphoserine; by PKG/PRKG1; in vitro. The disordered stretch occupies residues 32–53 (ANSSDATLPDRPLSPPLTAPPT). Ser45 bears the Phosphoserine mark. Residue Thr49 is modified to Phosphothreonine. Positions 248-464 (IVSYDEHEVN…RTRAALLDNL (217 aa)) constitute a Rap-GAP domain. Ser507 is subject to Phosphoserine. Positions 509-533 (ETMVGGQKKSHSGGIPGSLSGGISH) are disordered. Phosphoserine occurs at positions 544, 558, 564, 612, and 613. The segment at 552–730 (VKNQSRSPIK…LSHASSGAGH (179 aa)) is disordered. The segment covering 585-613 (DSTSSTPKTPDGGHSSQEIKSETSSNPSS) has biased composition (polar residues). The segment covering 618–631 (PNKEKPFMKLKENG) has biased composition (basic and acidic residues). Low complexity predominate over residues 635–647 (SRSSSSTSSVSST). Polar residues predominate over residues 661 to 670 (GSQPSTTSPF). Over residues 678–687 (SPSPSSESPS) the composition is skewed to low complexity. Polar residues predominate over residues 699 to 712 (RSPTDAKSRNSPRS).

Post-translationally, in vitro phosphorylated by cGMP-dependent protein kinase 1 (cGKI) at Ser-7; the phosphorylation probably does not regulate GAP activity. In terms of tissue distribution, isoform 1 and isoform 2 are expressed in platelets with isoform 2 being the predominant form. Expressed in lymphocytes, heart, testis and pancreas.

The protein localises to the cytoplasm. It localises to the perinuclear region. Functionally, GTPase activator for the nuclear Ras-related regulatory protein RAP-1A (KREV-1), converting it to the putatively inactive GDP-bound state. This chain is Rap1 GTPase-activating protein 2 (RAP1GAP2), found in Homo sapiens (Human).